Here is a 91-residue protein sequence, read N- to C-terminus: Putative defensin-like protein 83 (91 aa).

A signal peptide spans 1 to 27 (MATNKFLSILLLSLMAFAAILLPMISG). 4 disulfides stabilise this stretch: cysteine 32/cysteine 71, cysteine 37/cysteine 57, cysteine 43/cysteine 69, and cysteine 47/cysteine 70.

This sequence belongs to the DEFL family.

It is found in the secreted. The chain is Putative defensin-like protein 83 (LCR46) from Arabidopsis thaliana (Mouse-ear cress).